The sequence spans 574 residues: Adenine deaminase (574 aa).

It belongs to the metallo-dependent hydrolases superfamily. Adenine deaminase family. Mn(2+) is required as a cofactor.

The catalysed reaction is adenine + H2O + H(+) = hypoxanthine + NH4(+). In Thermosipho africanus (strain TCF52B), this protein is Adenine deaminase.